The following is a 311-amino-acid chain: tRNA dimethylallyltransferase (311 aa).

10–17 (GPTASGKT) is an ATP binding site. 12–17 (TASGKT) provides a ligand contact to substrate. Interaction with substrate tRNA stretches follow at residues 35-38 (DSAL), 159-163 (QRINR), and 240-245 (RCVGYR).

Belongs to the IPP transferase family. As to quaternary structure, monomer. It depends on Mg(2+) as a cofactor.

It catalyses the reaction adenosine(37) in tRNA + dimethylallyl diphosphate = N(6)-dimethylallyladenosine(37) in tRNA + diphosphate. Its function is as follows. Catalyzes the transfer of a dimethylallyl group onto the adenine at position 37 in tRNAs that read codons beginning with uridine, leading to the formation of N6-(dimethylallyl)adenosine (i(6)A). The protein is tRNA dimethylallyltransferase of Haemophilus influenzae (strain 86-028NP).